The chain runs to 353 residues: COMPASS component SPP1 (353 aa).

The segment at 22–72 (DVYCICKRPDYGELMVGCDGCDDWFHFTCLHIPEQFKDLVFSFYCPYCQAG) adopts a PHD-type zinc-finger fold. The Zn(2+) site is built by Cys-25, Cys-27, Cys-39, Cys-42, His-47, Cys-50, Cys-66, and Cys-69. The non coventional C3H-type zinc finger stretch occupies residues 83-124 (NGEGSLPKTLWKRKCRISDCYKPCLQDSKYCSEEHGREFVND). Ser-87 bears the Phosphoserine mark. The Zn(2+) site is built by Cys-97, Cys-102, Cys-113, and His-117. The segment covering 235 to 244 (VECGKEDSKG) has biased composition (basic and acidic residues). The tract at residues 235 to 255 (VECGKEDSKGTKRKKKKNSSR) is disordered. Over residues 245–255 (TKRKKKKNSSR) the composition is skewed to basic residues.

As to quaternary structure, component of the Set1C/COMPASS complex which consists of SET1(2), BRE2(2), SPP1(2), SDC1(1), SHG1(1), SWD1(1), SWD2(1), and SWD3(1).

It is found in the nucleus. Its function is as follows. Component of the Set1C/COMPASS complex that specifically mono-, di- and trimethylates histone H3 to form H3K4me1/2/3, which subsequently plays a role in telomere length maintenance and transcription elongation regulation. COMPASS recognizes ubiquitinated H2B on one face of the nucleosome which stimulates the methylation of H3 on the opposing face. SPP1/CPS40 can recognize methylated histone lysine residue H3K4me3 or unmethylated H3K4. Stimulates the RNA binding activity of SET1. The polypeptide is COMPASS component SPP1 (Saccharomyces cerevisiae (strain ATCC 204508 / S288c) (Baker's yeast)).